Reading from the N-terminus, the 264-residue chain is Phosphonoacetaldehyde hydrolase (264 aa).

The Nucleophile role is filled by Asp-9. The Mg(2+) site is built by Asp-9 and Ala-11. Lys-50 functions as the Schiff-base intermediate with substrate in the catalytic mechanism. Asp-183 contacts Mg(2+).

It belongs to the HAD-like hydrolase superfamily. PhnX family. In terms of assembly, homodimer. It depends on Mg(2+) as a cofactor.

The enzyme catalyses phosphonoacetaldehyde + H2O = acetaldehyde + phosphate + H(+). Its function is as follows. Involved in phosphonate degradation. The polypeptide is Phosphonoacetaldehyde hydrolase (Bacillus cereus (strain G9842)).